The sequence spans 186 residues: TATA-box-binding protein F (186 aa).

Tandem repeats lie at residues Ile10–Leu86 and Val101–Leu179.

This sequence belongs to the TBP family.

Its function is as follows. General factor that plays a role in the activation of archaeal genes transcribed by RNA polymerase. Binds specifically to the TATA box promoter element which lies close to the position of transcription initiation. The sequence is that of TATA-box-binding protein F (tbpF) from Halobacterium salinarum (strain ATCC 700922 / JCM 11081 / NRC-1) (Halobacterium halobium).